The sequence spans 1595 residues: Pentafunctional AROM polypeptide (1595 aa).

Residues 1–384 (MGVPTKISIL…HEPRASTVSN (384 aa)) are 3-dehydroquinate synthase. NAD(+) is bound by residues 44–46 (DTN), 81–84 (ESSK), 114–116 (GGV), and D119. 7-phospho-2-dehydro-3-deoxy-D-arabino-heptonate is bound at residue R130. Position 139-140 (139-140 (TT)) interacts with NAD(+). The 7-phospho-2-dehydro-3-deoxy-D-arabino-heptonate site is built by D146 and K152. Position 161 (K161) interacts with NAD(+). 7-phospho-2-dehydro-3-deoxy-D-arabino-heptonate is bound at residue N162. NAD(+) contacts are provided by residues 179 to 182 (FLNT) and N190. E194 provides a ligand contact to Zn(2+). 7-phospho-2-dehydro-3-deoxy-D-arabino-heptonate contacts are provided by residues 194 to 197 (EVIK) and K250. The active-site Proton acceptor; for 3-dehydroquinate synthase activity is the E260. 7-phospho-2-dehydro-3-deoxy-D-arabino-heptonate contacts are provided by residues 264 to 268 (RNLLN) and H271. H271 serves as a coordination point for Zn(2+). Residue H275 is the Proton acceptor; for 3-dehydroquinate synthase activity of the active site. 7-phospho-2-dehydro-3-deoxy-D-arabino-heptonate is bound by residues H287 and K356. H287 lines the Zn(2+) pocket. The tract at residues 397 to 842 (VSPGVPKGLD…WDSLAQTFKV (446 aa)) is EPSP synthase. C824 acts as the For EPSP synthase activity in catalysis. Residues 866–1057 (ASIFIIGMRG…RRKENTFFVS (192 aa)) are shikimate kinase. An ATP-binding site is contributed by 872–879 (GMRGAGKT). The segment at 1058–1278 (LTLPDLGLAA…AAPGQLSARE (221 aa)) is 3-dehydroquinase. Residue H1181 is the Proton acceptor; for 3-dehydroquinate dehydratase activity of the active site. The active-site Schiff-base intermediate with substrate; for 3-dehydroquinate dehydratase activity is the K1209. A shikimate dehydrogenase region spans residues 1291-1595 (AKKFAVIGNP…MGVLPSEDIS (305 aa)).

It in the N-terminal section; belongs to the sugar phosphate cyclases superfamily. Dehydroquinate synthase family. This sequence in the 2nd section; belongs to the EPSP synthase family. In the 3rd section; belongs to the shikimate kinase family. The protein in the 4th section; belongs to the type-I 3-dehydroquinase family. It in the C-terminal section; belongs to the shikimate dehydrogenase family. Homodimer. Requires Zn(2+) as cofactor.

The protein resides in the cytoplasm. It catalyses the reaction 7-phospho-2-dehydro-3-deoxy-D-arabino-heptonate = 3-dehydroquinate + phosphate. The catalysed reaction is 3-dehydroquinate = 3-dehydroshikimate + H2O. It carries out the reaction shikimate + NADP(+) = 3-dehydroshikimate + NADPH + H(+). The enzyme catalyses shikimate + ATP = 3-phosphoshikimate + ADP + H(+). It catalyses the reaction 3-phosphoshikimate + phosphoenolpyruvate = 5-O-(1-carboxyvinyl)-3-phosphoshikimate + phosphate. Its pathway is metabolic intermediate biosynthesis; chorismate biosynthesis; chorismate from D-erythrose 4-phosphate and phosphoenolpyruvate: step 2/7. It functions in the pathway metabolic intermediate biosynthesis; chorismate biosynthesis; chorismate from D-erythrose 4-phosphate and phosphoenolpyruvate: step 3/7. The protein operates within metabolic intermediate biosynthesis; chorismate biosynthesis; chorismate from D-erythrose 4-phosphate and phosphoenolpyruvate: step 4/7. It participates in metabolic intermediate biosynthesis; chorismate biosynthesis; chorismate from D-erythrose 4-phosphate and phosphoenolpyruvate: step 5/7. Its pathway is metabolic intermediate biosynthesis; chorismate biosynthesis; chorismate from D-erythrose 4-phosphate and phosphoenolpyruvate: step 6/7. Functionally, the AROM polypeptide catalyzes 5 consecutive enzymatic reactions in prechorismate polyaromatic amino acid biosynthesis. In Ajellomyces capsulatus (strain H143) (Darling's disease fungus), this protein is Pentafunctional AROM polypeptide.